The following is a 100-amino-acid chain: Cystatin-B (100 aa).

A Cystatin domain is found at 6 to 88; sequence GGISAPLDAD…GGGLELSGMQ (83 aa). Residues 48-52 carry the Secondary area of contact motif; sequence QIVSG.

This sequence belongs to the cystatin family. As to expression, widely expressed. Highly expressed in liver and to a lesser extent in spleen, gill, brain, intestine, kidney, head kidney and blood. Lowest level in muscle.

It is found in the cytoplasm. In terms of biological role, thiol protease inhibitor. Has papain inhibitory activity in vitro. May be involved in immune responses against invading Gram-negative bacteria. This Oplegnathus fasciatus (Barred knifejaw) protein is Cystatin-B.